The chain runs to 655 residues: A-type voltage-gated potassium channel KCND3 (655 aa).

Residues 1-182 (MAAGVAAWLP…FENPHTSTLA (182 aa)) lie on the Cytoplasmic side of the membrane. The interaction with KCNIP1 and KCNIP2 stretch occupies residues 6–21 (AAWLPFARAAAIGWMP). The segment at 70–78 (EKEFFFNED) is interaction with KCNIP1. Zn(2+) is bound by residues His104, Cys110, Cys131, and Cys132. Phosphoserine is present on Ser153. The chain crosses the membrane as a helical span at residues 183-204 (LVFYYVTGFFIAVSVITNVVET). Over 205 to 223 (VPCGTVPGSKELPCGERYS) the chain is Extracellular. Residues 224 to 246 (VAFFCLDTACVMIFTVEYLLRLF) form a helical membrane-spanning segment. Over 247–253 (AAPSRYR) the chain is Cytoplasmic. A helical membrane pass occupies residues 254-277 (FIRSVMSIIDVVAIMPYYIGLVMT). The Extracellular segment spans residues 278 to 283 (NNEDVS). Residues 284–306 (GAFVTLRVFRVFRIFKFSRHSQG) form a helical; Voltage-sensor membrane-spanning segment. Over 307-318 (LRILGYTLKSCA) the chain is Cytoplasmic. The chain crosses the membrane as a helical span at residues 319 to 343 (SELGFLLFSLTMAIIIFATVMFYAE). Topologically, residues 344-352 (KGSSASKFT) are extracellular. The segment at residues 353–366 (SIPASFWYTIVTMT) is an intramembrane region (helical). 4 residues coordinate K(+): Thr367, Leu368, Gly369, and Tyr370. The short motif at 367 to 372 (TLGYGD) is the Selectivity filter element. An intramembrane segment occupies 367-374 (TLGYGDMV). The chain crosses the membrane as a helical span at residues 378–400 (IAGKIFGSICSLSGVLVIALPVP). Residues 401 to 655 (VIVSNFSRIY…ASNVVKVSVL (255 aa)) lie on the Cytoplasmic side of the membrane. Thr459 bears the Phosphothreonine mark. Residues 470 to 487 (SLIESQHHHLLHCLEKTT) form an interaction with KCNIP1 and KCNIP2 region. A mediates dendritic targeting region spans residues 472-487 (IESQHHHLLHCLEKTT). Ser569 is modified (phosphoserine; by CaMK2D). Position 585 is a phosphoserine (Ser585). Residues 618–644 (PAPPALTPEGETRPPPASPGPNTNIPS) are disordered.

Belongs to the potassium channel family. D (Shal) (TC 1.A.1.2) subfamily. Kv4.3/KCND3 sub-subfamily. Homotetramer. Heterotetramer with KCND2. Associates with the regulatory subunits KCNIP3 and KCNIP4. Interacts with KCNE1, KCNE2, SCN1B and KCNAB1 and DLG1. Component of heteromultimeric potassium channels. Identified in potassium channel complexes containing KCND1, KCND2, KCND3, KCNIP1, KCNIP2, KCNIP3, KCNIP4, DPP6 and DPP10. Interacts with KCNIP1; each KCNIP1 monomer interacts with two adjacent KCND3 subunits, through both the N-terminal inactivation ball of a KCND3 subunit and a C-terminal helix from the adjacent KCND3 subunit, clamping them together; this interaction stabilizes the tetrameric form and modulates the channel gating kinetics namely channel activation and inactivation kinetics and rate of recovery from inactivation. Interacts with DPP6; this interaction modulates the channel gating kinetics namely channel activation and inactivation kinetics and rate of recovery from inactivation. Interacts with KCNIP2; each KCNIP2 monomer interacts with two adjacent KCND3 subunits, through both the N-terminal inactivation ball of a KCND3 subunit and a C-terminal helix from the adjacent KCND3 subunit, clamping them together; this interaction modulates the channel gating kinetics. Post-translationally, regulated through phosphorylation at Ser-569 by CaMK2D. Detected in carotid body chemoreceptor cells and in frontal cortex.

It localises to the cell membrane. The protein localises to the sarcolemma. The protein resides in the cell projection. It is found in the dendrite. The catalysed reaction is K(+)(in) = K(+)(out). Functionally, pore-forming (alpha) subunit of voltage-gated A-type potassium channels that mediates transmembrane potassium transport in excitable membranes, in brain and heart. In cardiomyocytes, may generate the transient outward potassium current I(To). In neurons, may conduct the transient subthreshold somatodendritic A-type potassium current (ISA). Kinetics properties are characterized by fast activation at subthreshold membrane potentials, rapid inactivation, and quick recovery from inactivation. Channel properties are modulated by interactions with regulatory subunits. Interaction with the regulatory subunits KCNIP1 or KCNIP2 modulates the channel gating kinetics namely channel activation and inactivation kinetics and rate of recovery from inactivation. Likewise, interaction with DPP6 modulates the channel gating kinetics namely channel activation and inactivation kinetics. The sequence is that of A-type voltage-gated potassium channel KCND3 from Oryctolagus cuniculus (Rabbit).